Reading from the N-terminus, the 46-residue chain is uncharacterized protein (46 aa).

A helical membrane pass occupies residues His12–Leu34.

It localises to the cell membrane. This is an uncharacterized protein from Bacillus subtilis (strain 168).